A 212-amino-acid polypeptide reads, in one-letter code: Thymidylate kinase (212 aa).

7–14 serves as a coordination point for ATP; the sequence is GIEGSGKS.

The protein belongs to the thymidylate kinase family.

The catalysed reaction is dTMP + ATP = dTDP + ADP. Phosphorylation of dTMP to form dTDP in both de novo and salvage pathways of dTTP synthesis. The sequence is that of Thymidylate kinase from Oleidesulfovibrio alaskensis (strain ATCC BAA-1058 / DSM 17464 / G20) (Desulfovibrio alaskensis).